We begin with the raw amino-acid sequence, 216 residues long: Endo-1,4-beta-xylanase 2 (216 aa).

An N-terminal signal peptide occupies residues 1 to 27 (MVSFSSLFVAACAAVTAFALPNELEKR). Residues 28-216 (AITSNEQGTN…SSGSASITVS (189 aa)) enclose the GH11 domain. Asn-87 carries N-linked (GlcNAc...) asparagine glycosylation. The active-site Nucleophile is Glu-112. The active-site Proton donor is the Glu-203.

It belongs to the glycosyl hydrolase 11 (cellulase G) family.

The protein resides in the secreted. The catalysed reaction is Endohydrolysis of (1-&gt;4)-beta-D-xylosidic linkages in xylans.. Its pathway is glycan degradation; xylan degradation. Functionally, endo-1,4-beta-xylanase involved in the hydrolysis of xylan, a major structural heterogeneous polysaccharide found in plant biomass representing the second most abundant polysaccharide in the biosphere, after cellulose. This chain is Endo-1,4-beta-xylanase 2 (xyn2), found in Rhizopus oryzae (Mucormycosis agent).